A 445-amino-acid polypeptide reads, in one-letter code: Tryptophan 5-hydroxylase 1 (445 aa).

An ACT domain is found at 19–94 (AIIFSLKNEV…SIVSMNPTEH (76 aa)). Position 58 is a phosphoserine; by PKA (serine 58). L-tryptophan-binding residues include tyrosine 236, arginine 258, and threonine 266. 3 residues coordinate Fe cation: histidine 273, histidine 278, and glutamate 318. L-tryptophan is bound by residues serine 337 and isoleucine 367.

The protein belongs to the biopterin-dependent aromatic amino acid hydroxylase family. As to quaternary structure, homotetramer. The cofactor is Fe(2+).

The catalysed reaction is (6R)-L-erythro-5,6,7,8-tetrahydrobiopterin + L-tryptophan + O2 = 5-hydroxy-L-tryptophan + (4aS,6R)-4a-hydroxy-L-erythro-5,6,7,8-tetrahydrobiopterin. It functions in the pathway aromatic compound metabolism; serotonin biosynthesis; serotonin from L-tryptophan: step 1/2. Oxidizes L-tryptophan to 5-hydroxy-l-tryptophan in the rate-determining step of serotonin biosynthesis. The sequence is that of Tryptophan 5-hydroxylase 1 (TPH1) from Gallus gallus (Chicken).